The following is a 730-amino-acid chain: Elongation factor 2 (730 aa).

The region spanning 18–238 is the tr-type G domain; it reads DQIRNFGVIA…YSEGKVDELV (221 aa). GTP is bound by residues 27–34, 93–97, and 147–150; these read AHVDHGKT, DTPGH, and NKVD. H595 bears the Diphthamide mark. The interval 711 to 730 is disordered; it reads RKRKGLAPDPPTVSEFIDRE.

This sequence belongs to the TRAFAC class translation factor GTPase superfamily. Classic translation factor GTPase family. EF-G/EF-2 subfamily.

It localises to the cytoplasm. Functionally, catalyzes the GTP-dependent ribosomal translocation step during translation elongation. During this step, the ribosome changes from the pre-translocational (PRE) to the post-translocational (POST) state as the newly formed A-site-bound peptidyl-tRNA and P-site-bound deacylated tRNA move to the P and E sites, respectively. Catalyzes the coordinated movement of the two tRNA molecules, the mRNA and conformational changes in the ribosome. This Cenarchaeum symbiosum (strain A) protein is Elongation factor 2.